The primary structure comprises 493 residues: Glutamyl-tRNA(Gln) amidotransferase subunit A (493 aa).

Catalysis depends on charge relay system residues lysine 79 and serine 159. The active-site Acyl-ester intermediate is the serine 183.

The protein belongs to the amidase family. GatA subfamily. As to quaternary structure, heterotrimer of A, B and C subunits.

The catalysed reaction is L-glutamyl-tRNA(Gln) + L-glutamine + ATP + H2O = L-glutaminyl-tRNA(Gln) + L-glutamate + ADP + phosphate + H(+). Functionally, allows the formation of correctly charged Gln-tRNA(Gln) through the transamidation of misacylated Glu-tRNA(Gln) in organisms which lack glutaminyl-tRNA synthetase. The reaction takes place in the presence of glutamine and ATP through an activated gamma-phospho-Glu-tRNA(Gln). The sequence is that of Glutamyl-tRNA(Gln) amidotransferase subunit A from Allorhizobium ampelinum (strain ATCC BAA-846 / DSM 112012 / S4) (Agrobacterium vitis (strain S4)).